A 173-amino-acid chain; its full sequence is Disulfide bond formation protein B 2 (173 aa).

Over 1-9 (MSLAGSRLL) the chain is Cytoplasmic. A helical transmembrane segment spans residues 10-26 (FSLVFLVGALASWAAFN). Residues 27 to 44 (LQTGGGLESCSLWSVQRL) lie on the Periplasmic side of the membrane. Residues 45–61 (LLLALGGVNLLAVIQGP) form a helical membrane-spanning segment. At 62–67 (GRVGRA) the chain is on the cytoplasmic side. The helical transmembrane segment at 68–85 (VYWGLNLLLGLLGVVTAG) threads the bilayer. Residues 86-142 (RHVLLQNIPSEQLLACLPDMSFMLRQLSWWQALKLTFMGTSDCAEVTWTLLDMSLPE) lie on the Periplasmic side of the membrane. Cysteine 101 and cysteine 128 are oxidised to a cystine. Residues 143–161 (WSLLFFVIMLIFSGYRLWR) traverse the membrane as a helical segment. The Cytoplasmic segment spans residues 162–173 (QLRGARKAVALP).

Belongs to the DsbB family.

It is found in the cell inner membrane. Its function is as follows. Required for disulfide bond formation in some periplasmic proteins. Acts by oxidizing the DsbA protein. The sequence is that of Disulfide bond formation protein B 2 from Pseudomonas fluorescens (strain ATCC BAA-477 / NRRL B-23932 / Pf-5).